We begin with the raw amino-acid sequence, 110 residues long: MAEGGYEDRELEELRRKKLEELQKKAELERQAQIAAAQRRIALKKILTPAALARLDNIRVVRPELAEALEQQLIALASSGRVRVPIDEDTLKEILEAVYSQSKREYRFRL.

The protein belongs to the PDCD5 family.

The protein is DNA-binding protein Tneu_1679 of Pyrobaculum neutrophilum (strain DSM 2338 / JCM 9278 / NBRC 100436 / V24Sta) (Thermoproteus neutrophilus).